The chain runs to 112 residues: Na(+)/H(+) antiporter subunit C (112 aa).

Helical transmembrane passes span 4–21 (LMSI…YLIL), 28–50 (VVVG…AGLQ), and 70–92 (QALI…VLAY).

Belongs to the CPA3 antiporters (TC 2.A.63) subunit C family. Forms a heterooligomeric complex that consists of seven subunits: MrpA, MrpB, MrpC, MrpD, MrpE, MrpF and MrpG.

The protein localises to the cell membrane. Its function is as follows. Mnh complex is a Na(+)Li(+)/H(+) antiporter involved in Na(+) and/or Li(+) excretion and Na(+) resistance. Na(+)/H(+) antiport consumes a transmembrane electrical potential, and is thus inferred to be electrogenic. Does not transport K(+), Ca(2+) or Mg(2+). The sequence is that of Na(+)/H(+) antiporter subunit C (mrpC) from Alkalihalophilus pseudofirmus (strain ATCC BAA-2126 / JCM 17055 / OF4) (Bacillus pseudofirmus).